The following is a 261-amino-acid chain: Kallikrein 1-related peptidase b16 (261 aa).

Residues 1 to 18 (MWFLILFLALSLGGIDAA) form the signal peptide. Positions 19-24 (PPVQSR) are cleaved as a propeptide — activation peptide. The Peptidase S1 domain occupies 25–258 (IVGGFKCEKN…FNSWIKDTMM (234 aa)). 5 cysteine pairs are disulfide-bonded: Cys31/Cys173, Cys50/Cys66, Cys152/Cys219, Cys184/Cys198, and Cys209/Cys234. The Charge relay system role is filled by His65. Asn102 carries an N-linked (GlcNAc...) asparagine glycan. Asp120 acts as the Charge relay system in catalysis. Ser213 serves as the catalytic Charge relay system.

It belongs to the peptidase S1 family. Kallikrein subfamily.

It carries out the reaction Cleavage of the Leu-|-Leu bond in synthetic tetradecapeptide renin substrate, to produce angiotensin I, but not active on natural angiotensinogen. Also hydrolyzes Bz-Arg-p-nitroanilide.. The polypeptide is Kallikrein 1-related peptidase b16 (Klk1b16) (Mus musculus (Mouse)).